The primary structure comprises 177 residues: Bifunctional protein PyrR (177 aa).

The PRPP-binding motif lies at 99–111; the sequence is VVLVDDVLYTGRT.

The protein belongs to the purine/pyrimidine phosphoribosyltransferase family. PyrR subfamily. Homodimer and homohexamer; in equilibrium.

The enzyme catalyses UMP + diphosphate = 5-phospho-alpha-D-ribose 1-diphosphate + uracil. Its function is as follows. Regulates transcriptional attenuation of the pyrimidine nucleotide (pyr) operon by binding in a uridine-dependent manner to specific sites on pyr mRNA. This disrupts an antiterminator hairpin in the RNA and favors formation of a downstream transcription terminator, leading to a reduced expression of downstream genes. In terms of biological role, also displays a weak uracil phosphoribosyltransferase activity which is not physiologically significant. The chain is Bifunctional protein PyrR from Clostridioides difficile (strain 630) (Peptoclostridium difficile).